The sequence spans 316 residues: Probable metal transport system membrane protein TC_0342 (316 aa).

A run of 10 helical transmembrane segments spans residues 1 to 21 (MFASISPYYGVSFFEFFIVFF), 39 to 59 (IQVIVFFAIAVSCSIIGTFLV), 64 to 84 (AMYANVVSHTILFGLVCACLF), 94 to 114 (QNLTIAAISTTLLTGASIHFI), 124 to 144 (ASTALVFSLLFSASLLLLVFL), 171 to 191 (FLVLLXNLGVSYCFFSSFICV), 196 to 216 (VFAFSLGIRVKLIDYLMMFLL), 226 to 246 (AVGVLMSLAFLLVPGLIAKLI), 252 to 272 (EMMGYSMIFGVLSALIAPALS), and 286 to 306 (SGLAVCLLLVFYIGTLATVFV).

This sequence belongs to the ABC-3 integral membrane protein family.

Its subcellular location is the cell inner membrane. Its function is as follows. Part of an ATP-driven transport system TC_0338/TC_0339/TC_0341/TC_0342 for a metal. This chain is Probable metal transport system membrane protein TC_0342, found in Chlamydia muridarum (strain MoPn / Nigg).